We begin with the raw amino-acid sequence, 337 residues long: Mannan polymerase complex subunit mnn9 (337 aa).

At methionine 1–arginine 8 the chain is on the cytoplasmic side. Residues isoleucine 9–proline 29 form a helical; Signal-anchor for type II membrane protein membrane-spanning segment. Residues serine 30–glutamate 337 lie on the Lumenal side of the membrane.

The protein belongs to the ANP1/MMN9/VAN1 family.

It localises to the endoplasmic reticulum membrane. Its subcellular location is the golgi apparatus membrane. It participates in protein modification; protein glycosylation. Required for the addition of the long alpha 1,6-mannose backbone of N-linked glycans on cell wall and periplasmic proteins. The protein is Mannan polymerase complex subunit mnn9 of Schizosaccharomyces pombe (strain 972 / ATCC 24843) (Fission yeast).